Consider the following 316-residue polypeptide: Ribosomal RNA small subunit methyltransferase H (316 aa).

S-adenosyl-L-methionine is bound by residues 35-37 (SGH), Asp-55, Phe-84, Asp-105, and Gln-112.

Belongs to the methyltransferase superfamily. RsmH family.

Its subcellular location is the cytoplasm. The catalysed reaction is cytidine(1402) in 16S rRNA + S-adenosyl-L-methionine = N(4)-methylcytidine(1402) in 16S rRNA + S-adenosyl-L-homocysteine + H(+). Functionally, specifically methylates the N4 position of cytidine in position 1402 (C1402) of 16S rRNA. The protein is Ribosomal RNA small subunit methyltransferase H of Streptococcus pyogenes serotype M6 (strain ATCC BAA-946 / MGAS10394).